Consider the following 488-residue polypeptide: Inosine-5'-monophosphate dehydrogenase (488 aa).

CBS domains follow at residues 95–153 (VITN…SIKI) and 157–213 (MTKE…PHAA). NAD(+) is bound by residues aspartate 250 and 300–302 (GIG). Residues glycine 302 and glycine 304 each coordinate K(+). Residue serine 305 coordinates IMP. Cysteine 307 contacts K(+). The active-site Thioimidate intermediate is cysteine 307. Residues 340-342 (DGG), 363-364 (GS), and 387-391 (YRGMG) contribute to the IMP site. Arginine 403 acts as the Proton acceptor in catalysis. Glutamate 417 provides a ligand contact to IMP. The tract at residues 467–488 (AGLAESHPHNVQITKESPNYSF) is disordered. Positions 471, 472, and 473 each coordinate K(+). A compositionally biased stretch (polar residues) spans 475 to 488 (HNVQITKESPNYSF).

The protein belongs to the IMPDH/GMPR family. In terms of assembly, homotetramer. Requires K(+) as cofactor.

The enzyme catalyses IMP + NAD(+) + H2O = XMP + NADH + H(+). Its pathway is purine metabolism; XMP biosynthesis via de novo pathway; XMP from IMP: step 1/1. Mycophenolic acid (MPA) is a non-competitive inhibitor that prevents formation of the closed enzyme conformation by binding to the same site as the amobile flap. In contrast, mizoribine monophosphate (MZP) is a competitive inhibitor that induces the closed conformation. MPA is a potent inhibitor of mammalian IMPDHs but a poor inhibitor of the bacterial enzymes. MZP is a more potent inhibitor of bacterial IMPDH. Catalyzes the conversion of inosine 5'-phosphate (IMP) to xanthosine 5'-phosphate (XMP), the first committed and rate-limiting step in the de novo synthesis of guanine nucleotides, and therefore plays an important role in the regulation of cell growth. This Staphylococcus haemolyticus (strain JCSC1435) protein is Inosine-5'-monophosphate dehydrogenase.